The primary structure comprises 331 residues: ADP-L-glycero-D-manno-heptose-6-epimerase (331 aa).

NADP(+) is bound by residues 11–12 (FI), 32–33 (DN), Lys-39, Lys-54, 75–79 (EGACS), and Asn-92. Tyr-139 functions as the Proton acceptor in the catalytic mechanism. Lys-143 contacts NADP(+). Substrate is bound at residue Asn-168. NADP(+) is bound by residues Val-169 and Lys-177. Lys-177 (proton acceptor) is an active-site residue. Substrate contacts are provided by residues Arg-179, His-186, 200–203 (FGEY), Arg-213, and Tyr-292.

Belongs to the NAD(P)-dependent epimerase/dehydratase family. HldD subfamily. Homopentamer. NADP(+) is required as a cofactor.

It catalyses the reaction ADP-D-glycero-beta-D-manno-heptose = ADP-L-glycero-beta-D-manno-heptose. It functions in the pathway nucleotide-sugar biosynthesis; ADP-L-glycero-beta-D-manno-heptose biosynthesis; ADP-L-glycero-beta-D-manno-heptose from D-glycero-beta-D-manno-heptose 7-phosphate: step 4/4. Functionally, catalyzes the interconversion between ADP-D-glycero-beta-D-manno-heptose and ADP-L-glycero-beta-D-manno-heptose via an epimerization at carbon 6 of the heptose. This Ralstonia pickettii (strain 12J) protein is ADP-L-glycero-D-manno-heptose-6-epimerase.